The sequence spans 136 residues: Transcription antitermination protein NusB (136 aa).

This sequence belongs to the NusB family.

Involved in transcription antitermination. Required for transcription of ribosomal RNA (rRNA) genes. Binds specifically to the boxA antiterminator sequence of the ribosomal RNA (rrn) operons. The protein is Transcription antitermination protein NusB of Kineococcus radiotolerans (strain ATCC BAA-149 / DSM 14245 / SRS30216).